Reading from the N-terminus, the 378-residue chain is Transmembrane 6 superfamily member 2 (378 aa).

9 helical membrane-spanning segments follow: residues 34 to 54 (LCVV…VYSL), 63 to 83 (PLYA…VIAL), 110 to 130 (IFIC…MAGA), 140 to 160 (LGLY…PGNI), 170 to 190 (PTFF…MRIF), 219 to 239 (LTLI…GLVV), 269 to 289 (MLMY…ALTF), 291 to 311 (GCSW…QAQF), and 332 to 352 (TWAT…LLAL). 2 EXPERA domains span residues 61–186 (YDPL…CWAG) and 217–351 (ADLT…HLLA).

Belongs to the TM6SF family.

It is found in the endoplasmic reticulum membrane. The protein resides in the endoplasmic reticulum-Golgi intermediate compartment membrane. In terms of biological role, regulator of liver fat metabolism influencing triglyceride secretion and hepatic lipid droplet content. May function as sterol isomerase. The protein is Transmembrane 6 superfamily member 2 (Tm6sf2) of Rattus norvegicus (Rat).